The primary structure comprises 336 residues: Cytoplasmic envelopment protein 2 (336 aa).

Positions 67 to 69 (KKK) are interaction with host BBLF1.

Belongs to the herpesviridae cytoplasmic envelopment protein 2 family. In terms of assembly, homodimer. Interacts with BBLF1. Interacts with the capsid. Interacts with BKRF4 (via C-terminus); this interaction is important for infectious virion production. Interacts with host TYK2; this interaction participates to the inhibition of host type I IFN signaling. Interacts with host STAT1; this interaction leads to STAT1 dephosphorylation and inhibition. Interacts with host STAT2; this interaction leads to STAT2 degradation. Interacts with host CUL1; this interaction might facilitate CUL1 recruitment to STAT2, leading to ubiquitination and degradation of the latter. Interacts with host AGO2; this interaction participates to the host miRNA regulation leading to enhanced SUMOylation.

It is found in the virion tegument. The protein localises to the host cytoplasm. It localises to the host nucleus. The protein resides in the host Golgi apparatus. Its subcellular location is the host trans-Golgi network. In terms of biological role, plays a critical role in cytoplasmic virus egress. Participates in the final step of tegumentation and envelope acquisition within the host cytoplasm by directly interacting with the capsid. Upon virion binding to target cell, a signaling cascade is triggered to disrupt the interaction with the capsid, thereby preparing capsid uncoating. Activates the AP-1 pathway and enhances EBV reactivation and virus release. Inhibits type I IFN-induced TYK2, STAT1 and STAT3 phosphorylation, thereby impairing type I IFN signaling and counteracting the ability of IFN-alpha to suppress the reactivation of EBV. Recruits SHP1 phosphatase to dephosphorylate STAT1. Mediates STAT2 ubiquitination and proteasomal degradation. Also suppresses type II and type III IFN signaling. Contributes to G1/S arrest in the host cell. Acts as an miRNA regulator that interferes with the function of RISC in miRNA-mediated mRNA silencing. As a result, SUMOylation is increased. When encapsulated in the exosomes released by EBV-infected host cells, may facilitate the infection in recipient cells. This Epstein-Barr virus (strain AG876) (HHV-4) protein is Cytoplasmic envelopment protein 2.